The following is a 389-amino-acid chain: Chalcone synthase J (389 aa).

The active site involves C164.

This sequence belongs to the thiolase-like superfamily. Chalcone/stilbene synthases family.

It catalyses the reaction (E)-4-coumaroyl-CoA + 3 malonyl-CoA + 3 H(+) = 2',4,4',6'-tetrahydroxychalcone + 3 CO2 + 4 CoA. Its pathway is secondary metabolite biosynthesis; flavonoid biosynthesis. In terms of biological role, the primary product of this enzyme is 4,2',4',6'-tetrahydroxychalcone (also termed naringenin-chalcone or chalcone) which can under specific conditions spontaneously isomerize into naringenin. The sequence is that of Chalcone synthase J (CHSJ) from Petunia hybrida (Petunia).